The primary structure comprises 193 residues: Rho-related GTP-binding protein RhoA-C (193 aa).

GTP contacts are provided by residues 12–19, 30–37, 59–63, 117–120, and 160–162; these read GDGACGKT, FPEVYVPT, DTAGQ, NKKD, and SAK. The (Microbial infection) O-linked (GlcNAc) tyrosine; by Yersinia Afp18 glycan is linked to Tyr34. A Cysteine methyl ester modification is found at Cys190. Cys190 is lipidated: S-geranylgeranyl cysteine. A propeptide spans 191-193 (removed in mature form); sequence LLL.

This sequence belongs to the small GTPase superfamily. Rho family. (Microbial infection) Glycosylated at Tyr-34 by Yersinia ruckeri toxin Afp18. Mono-O-GlcNAcylation by Afp18 inhibits RhoA activation by guanine nucleotide exchange factors and blocks RhoA signaling.

The protein localises to the cell membrane. Functionally, regulates a signal transduction pathway linking plasma membrane receptors to the assembly of focal adhesions and actin stress fibers. The polypeptide is Rho-related GTP-binding protein RhoA-C (Danio rerio (Zebrafish)).